Reading from the N-terminus, the 133-residue chain is Small ribosomal subunit protein uS8 (133 aa).

Residues 1–29 (MANHDPISDMLTRIRNASEKRHETTRIPA) form a disordered region. Basic and acidic residues predominate over residues 16–25 (NASEKRHETT).

The protein belongs to the universal ribosomal protein uS8 family. As to quaternary structure, part of the 30S ribosomal subunit. Contacts proteins S5 and S12.

Its function is as follows. One of the primary rRNA binding proteins, it binds directly to 16S rRNA central domain where it helps coordinate assembly of the platform of the 30S subunit. In Prochlorococcus marinus (strain MIT 9211), this protein is Small ribosomal subunit protein uS8.